Here is a 279-residue protein sequence, read N- to C-terminus: uncharacterized protein (279 aa).

Residues 14–71 enclose the HTH lysR-type domain; sequence ITPNQIKLLIALHKTKSQNEAAKLLNIKPSSFNIQLKRLENKLGVKLYYSSPNGTVLT. Residues 31–50 constitute a DNA-binding region (H-T-H motif); sequence QNEAAKLLNIKPSSFNIQLK.

Belongs to the LysR transcriptional regulatory family.

This is an uncharacterized protein from Methanocaldococcus jannaschii (strain ATCC 43067 / DSM 2661 / JAL-1 / JCM 10045 / NBRC 100440) (Methanococcus jannaschii).